The primary structure comprises 109 residues: uncharacterized protein (109 aa).

This is an uncharacterized protein from Bos taurus (Bovine).